Reading from the N-terminus, the 376-residue chain is Probable cysteine protease RDL3 (376 aa).

The signal sequence occupies residues 1–27; sequence MAISFRTLALLTLSVLLISISLGVVTA. A propeptide spans 28-126 (activation peptide); the sequence is TESQRNEGEV…ERYQYKEGDV (99 aa). Asparagine 80 carries N-linked (GlcNAc...) asparagine glycosylation. 2 disulfides stabilise this stretch: cysteine 149/cysteine 192 and cysteine 183/cysteine 226. Cysteine 152 is an active-site residue. Asparagine 270 carries an N-linked (GlcNAc...) asparagine glycan. Residues cysteine 283 and cysteine 336 are joined by a disulfide bond. Active-site residues include histidine 290 and asparagine 311. N-linked (GlcNAc...) asparagine glycosylation is present at asparagine 349.

Belongs to the peptidase C1 family. In terms of tissue distribution, expressed in root hairs.

Probable thiol protease. This chain is Probable cysteine protease RDL3, found in Arabidopsis thaliana (Mouse-ear cress).